Consider the following 313-residue polypeptide: MASEKLKAAIIGSGNIGTDLMIKIMRHSEHLEMAAMVGIDAASDGLARAARLGVATTHEGVEGLTRLPVFDDIDFVFDATSAGAHVKNDAFLRALKPGIRLIDLTPAAIGPYCVPVVNLDAHLDSRNVNMVTCGGQATIPMVAAVSRVAKVHYAEIVASISSKSAGPGTRANIDEFTETTSKAIEAVGGAAKGKAIIVLNPAEPPVMMRDTVYVLSDLADRAQVEASIEAMAAAVHAYVPGYRLKQKVQFDEIAADVPLNIPGLGRFSGLKTSVFIEVEGAAHYLPAYAGNLDIMTSAALATAERMAQSLVQA.

Position 13–16 (13–16 (SGNI)) interacts with NAD(+). Cysteine 133 acts as the Acyl-thioester intermediate in catalysis. Residues 164-172 (SAGPGTRAN) and asparagine 291 contribute to the NAD(+) site.

Belongs to the acetaldehyde dehydrogenase family.

It catalyses the reaction acetaldehyde + NAD(+) + CoA = acetyl-CoA + NADH + H(+). This Paraburkholderia xenovorans (strain LB400) protein is Acetaldehyde dehydrogenase 3.